The following is a 127-amino-acid chain: Aspartate 1-decarboxylase (127 aa).

S25 (schiff-base intermediate with substrate; via pyruvic acid) is an active-site residue. S25 carries the post-translational modification Pyruvic acid (Ser). T57 provides a ligand contact to substrate. The Proton donor role is filled by Y58. A substrate-binding site is contributed by 73-75 (GAA).

Belongs to the PanD family. In terms of assembly, heterooctamer of four alpha and four beta subunits. Pyruvate serves as cofactor. In terms of processing, is synthesized initially as an inactive proenzyme, which is activated by self-cleavage at a specific serine bond to produce a beta-subunit with a hydroxyl group at its C-terminus and an alpha-subunit with a pyruvoyl group at its N-terminus.

It is found in the cytoplasm. It carries out the reaction L-aspartate + H(+) = beta-alanine + CO2. It participates in cofactor biosynthesis; (R)-pantothenate biosynthesis; beta-alanine from L-aspartate: step 1/1. Catalyzes the pyruvoyl-dependent decarboxylation of aspartate to produce beta-alanine. This chain is Aspartate 1-decarboxylase, found in Clostridium botulinum (strain 657 / Type Ba4).